A 322-amino-acid polypeptide reads, in one-letter code: Mitochondrial uncoupling protein 4 (322 aa).

3 Solcar repeats span residues 20 to 114, 124 to 216, and 225 to 316; these read SKFL…LREV, YPLW…VKHY, and DNIS…IREM. 6 consecutive transmembrane segments (helical) span residues 22-39, 87-108, 126-143, 194-211, 228-247, and 287-310; these read FLLS…TFPL, WQGV…MVTY, LWKS…GQFL, PNIQ…TTYD, STHG…LGTP, and SLYK…WLTY.

It belongs to the mitochondrial carrier (TC 2.A.29) family. As to quaternary structure, homotetramer.

The protein localises to the mitochondrion inner membrane. It is found in the cell projection. Its subcellular location is the neuron projection. It catalyses the reaction H(+)(in) = H(+)(out). It carries out the reaction chloride(in) = chloride(out). Its function is as follows. Facilitates proton transport across the inner mitochondrial membrane and may dissipate excessive proton gradient associated with oxidative and metabolic stress at neuronal synapses. Regulates glutamate-induced proton conductance in astrocytes, shifting the energy metabolism toward aerobic glycolysis and lactate transfer to neurons for ATP synthesis. Can transport chloride ions with lower efficiency. The transport mechanism remains to be elucidated. The sequence is that of Mitochondrial uncoupling protein 4 from Mus musculus (Mouse).